We begin with the raw amino-acid sequence, 281 residues long: Energy-coupling factor transporter ATP-binding protein EcfA1 (281 aa).

Residues 6-242 (IDVKHLDYRY…GEALIKMGLD (237 aa)) form the ABC transporter domain. 42 to 49 (GHNGSGKS) lines the ATP pocket.

It belongs to the ABC transporter superfamily. Energy-coupling factor EcfA family. As to quaternary structure, forms a stable energy-coupling factor (ECF) transporter complex composed of 2 membrane-embedded substrate-binding proteins (S component), 2 ATP-binding proteins (A component) and 2 transmembrane proteins (T component).

The protein resides in the cell membrane. Functionally, ATP-binding (A) component of a common energy-coupling factor (ECF) ABC-transporter complex. Unlike classic ABC transporters this ECF transporter provides the energy necessary to transport a number of different substrates. This is Energy-coupling factor transporter ATP-binding protein EcfA1 from Lactiplantibacillus plantarum (strain ATCC BAA-793 / NCIMB 8826 / WCFS1) (Lactobacillus plantarum).